The chain runs to 202 residues: Potassium-transporting ATPase KdpC subunit 1 (202 aa).

Residues 17-37 form a helical membrane-spanning segment; the sequence is LWVIAAVIYPFFMIAVGQIVF.

This sequence belongs to the KdpC family. As to quaternary structure, the system is composed of three essential subunits: KdpA, KdpB and KdpC.

The protein resides in the cell inner membrane. Functionally, part of the high-affinity ATP-driven potassium transport (or Kdp) system, which catalyzes the hydrolysis of ATP coupled with the electrogenic transport of potassium into the cytoplasm. This subunit acts as a catalytic chaperone that increases the ATP-binding affinity of the ATP-hydrolyzing subunit KdpB by the formation of a transient KdpB/KdpC/ATP ternary complex. This chain is Potassium-transporting ATPase KdpC subunit 1, found in Nostoc sp. (strain PCC 7120 / SAG 25.82 / UTEX 2576).